A 498-amino-acid polypeptide reads, in one-letter code: ATP synthase subunit beta, chloroplastic (498 aa).

172–179 contributes to the ATP binding site; sequence GGAGVGKT.

This sequence belongs to the ATPase alpha/beta chains family. F-type ATPases have 2 components, CF(1) - the catalytic core - and CF(0) - the membrane proton channel. CF(1) has five subunits: alpha(3), beta(3), gamma(1), delta(1), epsilon(1). CF(0) has four main subunits: a(1), b(1), b'(1) and c(9-12).

It is found in the plastid. Its subcellular location is the chloroplast thylakoid membrane. The enzyme catalyses ATP + H2O + 4 H(+)(in) = ADP + phosphate + 5 H(+)(out). Functionally, produces ATP from ADP in the presence of a proton gradient across the membrane. The catalytic sites are hosted primarily by the beta subunits. The sequence is that of ATP synthase subunit beta, chloroplastic from Drimys granadensis.